The chain runs to 217 residues: Probable chemoreceptor glutamine deamidase CheD (217 aa).

The tract at residues 194 to 217 is disordered; sequence ATSGTAPSRGGELFTRASASRTPS.

It belongs to the CheD family.

It catalyses the reaction L-glutaminyl-[protein] + H2O = L-glutamyl-[protein] + NH4(+). Probably deamidates glutamine residues to glutamate on methyl-accepting chemotaxis receptors (MCPs), playing an important role in chemotaxis. This Cupriavidus pinatubonensis (strain JMP 134 / LMG 1197) (Cupriavidus necator (strain JMP 134)) protein is Probable chemoreceptor glutamine deamidase CheD.